Reading from the N-terminus, the 212-residue chain is Pyridoxine/pyridoxamine 5'-phosphate oxidase (212 aa).

Residues 9–12 (RKSY) and Lys67 each bind substrate. FMN-binding positions include 62–67 (RIVLIK), 77–78 (FT), Arg83, and Lys84. Tyr124, Arg128, and Ser132 together coordinate substrate. FMN is bound by residues 141 to 142 (QS) and Trp185. 191-193 (RLH) contacts substrate. Arg195 serves as a coordination point for FMN.

Belongs to the pyridoxamine 5'-phosphate oxidase family. As to quaternary structure, homodimer. It depends on FMN as a cofactor.

It carries out the reaction pyridoxamine 5'-phosphate + O2 + H2O = pyridoxal 5'-phosphate + H2O2 + NH4(+). It catalyses the reaction pyridoxine 5'-phosphate + O2 = pyridoxal 5'-phosphate + H2O2. The protein operates within cofactor metabolism; pyridoxal 5'-phosphate salvage; pyridoxal 5'-phosphate from pyridoxamine 5'-phosphate: step 1/1. Its pathway is cofactor metabolism; pyridoxal 5'-phosphate salvage; pyridoxal 5'-phosphate from pyridoxine 5'-phosphate: step 1/1. Its function is as follows. Catalyzes the oxidation of either pyridoxine 5'-phosphate (PNP) or pyridoxamine 5'-phosphate (PMP) into pyridoxal 5'-phosphate (PLP). This Verminephrobacter eiseniae (strain EF01-2) protein is Pyridoxine/pyridoxamine 5'-phosphate oxidase.